The primary structure comprises 101 residues: Small ribosomal subunit protein bS18c (101 aa).

Belongs to the bacterial ribosomal protein bS18 family. In terms of assembly, part of the 30S ribosomal subunit.

It localises to the plastid. It is found in the chloroplast. In Eucalyptus globulus subsp. globulus (Tasmanian blue gum), this protein is Small ribosomal subunit protein bS18c.